The sequence spans 148 residues: Putative nickel-responsive regulator (148 aa).

His-88, His-99, His-101, and Cys-107 together coordinate Ni(2+).

Belongs to the transcriptional regulatory CopG/NikR family. The cofactor is Ni(2+).

Functionally, transcriptional regulator. This chain is Putative nickel-responsive regulator, found in Helicobacter acinonychis (strain Sheeba).